The sequence spans 204 residues: Phosphopantothenoylcysteine decarboxylase (204 aa).

Residues Thr-53 and 104–107 (DANT) each bind FMN. Residue Asn-140 participates in substrate binding. Cys-173 (proton donor) is an active-site residue.

This sequence belongs to the HFCD (homooligomeric flavin containing Cys decarboxylase) superfamily. Homotrimer. Requires FMN as cofactor.

It carries out the reaction N-[(R)-4-phosphopantothenoyl]-L-cysteine + H(+) = (R)-4'-phosphopantetheine + CO2. It participates in cofactor biosynthesis; coenzyme A biosynthesis; CoA from (R)-pantothenate: step 3/5. Catalyzes the decarboxylation of the cysteine moiety of 4-phosphopantothenoylcysteine to form 4'-phosphopantotheine and this reaction forms part of the biosynthesis of coenzyme A. This Mus musculus (Mouse) protein is Phosphopantothenoylcysteine decarboxylase (Ppcdc).